A 548-amino-acid chain; its full sequence is Chaperonin GroEL (548 aa).

ATP contacts are provided by residues 29 to 32 (TMGP), K50, 86 to 90 (DGTTT), G414, 478 to 480 (NAA), and D494.

It belongs to the chaperonin (HSP60) family. Forms a cylinder of 14 subunits composed of two heptameric rings stacked back-to-back. Interacts with the co-chaperonin GroES.

It localises to the cytoplasm. It catalyses the reaction ATP + H2O + a folded polypeptide = ADP + phosphate + an unfolded polypeptide.. Together with its co-chaperonin GroES, plays an essential role in assisting protein folding. The GroEL-GroES system forms a nano-cage that allows encapsulation of the non-native substrate proteins and provides a physical environment optimized to promote and accelerate protein folding. This is Chaperonin GroEL from Legionella pneumophila (strain Corby).